Here is a 71-residue protein sequence, read N- to C-terminus: Pro-MCH (71 aa).

Positions 1-20 are cleaved as a signal peptide; it reads AKMNLSSYILILTFSLFSQG.

The protein belongs to the melanin-concentrating hormone family.

It is found in the secreted. The polypeptide is Pro-MCH (PMCH) (Pan paniscus (Pygmy chimpanzee)).